Reading from the N-terminus, the 172-residue chain is Translationally-controlled tumor protein homolog (172 aa).

Positions 1-172 (MIIFKDLLTG…FKHGLDEEKV (172 aa)) constitute a TCTP domain.

The protein belongs to the TCTP family. In terms of tissue distribution, expressed by the venom gland.

Its subcellular location is the secreted. In terms of biological role, venom protein that causes edema, enhances vascular permeability and is likely related to the inflammatory activity of the venom. This Loxosceles intermedia (Brown spider) protein is Translationally-controlled tumor protein homolog.